A 314-amino-acid polypeptide reads, in one-letter code: Flotillin-like protein FloA (314 aa).

The helical transmembrane segment at 4 to 24 (IGPIIIAVLIIIFLIVFFTLV) threads the bilayer.

The protein belongs to the flotillin-like FloA family. As to quaternary structure, homooligomerizes.

The protein resides in the cell membrane. It is found in the membrane raft. Found in functional membrane microdomains (FMM) that may be equivalent to eukaryotic membrane rafts. FMMs are highly dynamic and increase in number as cells age. Flotillins are thought to be important factors in membrane fluidity. This is Flotillin-like protein FloA from Listeria innocua serovar 6a (strain ATCC BAA-680 / CLIP 11262).